The following is a 319-amino-acid chain: Protein-methionine-sulfoxide reductase catalytic subunit MsrP (319 aa).

The tat-type signal signal peptide spans 1 to 40; the sequence is MHKLNENDVTPEHIFFERRKIIQSMGLMGAASLLPRFSLA. Mo-molybdopterin is bound by residues Asn-73, 76 to 77, Cys-131, Thr-166, Asn-218, Arg-223, and 234 to 236; these read YE and NIK.

The protein belongs to the MsrP family. In terms of assembly, heterodimer of a catalytic subunit (MsrP) and a heme-binding subunit (MsrQ). The cofactor is Mo-molybdopterin. Predicted to be exported by the Tat system. The position of the signal peptide cleavage has not been experimentally proven.

Its subcellular location is the periplasm. It carries out the reaction L-methionyl-[protein] + a quinone + H2O = L-methionyl-(S)-S-oxide-[protein] + a quinol. The catalysed reaction is L-methionyl-[protein] + a quinone + H2O = L-methionyl-(R)-S-oxide-[protein] + a quinol. Functionally, part of the MsrPQ system that repairs oxidized periplasmic proteins containing methionine sulfoxide residues (Met-O), using respiratory chain electrons. Thus protects these proteins from oxidative-stress damage caused by reactive species of oxygen and chlorine generated by the host defense mechanisms. MsrPQ is essential for the maintenance of envelope integrity under bleach stress, rescuing a wide series of structurally unrelated periplasmic proteins from methionine oxidation. The catalytic subunit MsrP is non-stereospecific, being able to reduce both (R-) and (S-) diastereoisomers of methionine sulfoxide. The sequence is that of Protein-methionine-sulfoxide reductase catalytic subunit MsrP from Pasteurella multocida (strain Pm70).